The sequence spans 1023 residues: MWDQRLVRLALLQHLRAFYGIKVKGVRGQCDRRRHETAATEIGGKIFGVPFNALPHSAVPEYGHIPSFLVDACTSLEDHIHTEGLFRKSGSVIRLKALKNKVDHGEGCLSSAPPCDIAGLLKQFFRELPEPILPADLHEALLKAQQLGTEEKNKATLLLSCLLADHTVHVLRYFFNFLRNVSLRSSENKMDSSNLAVIFAPNLLQTSEGHEKMSSNTEKKLRLQAAVVQTLIDYASDIGRVPDFILEKIPAMLGIDGLCATPSLEGFEEGEYETPGEYKRKRRQSVGDFVSGALNKFKPNRTPSITPQEERIAQLSESPVILTPNAKRTLPVDSSHGFSSKKRKSIKHNFNFELLPSNLFNSSSTPVSVHIDTSSEGSSQSSLSPVLIGGNHLITAGVPRRSKRIAGKKVCRVESGKAGCFSPKISHKEKVRRSLRLKFNLGKNGREVNGCSGVNRYESVGWRLANQQSLKNRIESVKTGLLFSPDVDEKLPKKGSEKISKSEETLLTPERLVGTNYRMSWTGPNNSSFQEVDANEASSMVENLEVENSLEPDIMVEKSPATSCELTPSNLNNKHNSNITSSPLSGDENNMTKETLVKVQKAFSESGSNLHALMNQRQSSVTNVGKVKLTEPSYLEDSPEENLFETNDLTIVESKEKYEHHTGKGEKCFSERDFSPLQTQTFNRETTIKCYSTQMKMEHEKDIHSNMPKDYLSKQEFSSDEEIKKQQSPKDKLNNKLKENENMMEGNLPKCAAHSKDEARSSFSQQSTCVVTNLSKPRPMRIAKQQSLETCEKTVSESSQMTEHRKVSDHIQWFNKLSLNEPNRIKVKSPLKFQRTPVRQSVRRINSLLEYSRQPTGHKLASLGDTASPLVKSVSCDGALSSCIESASKDSSVSCIKSGPKEQKSMSCEESNIGAISKSSMELPSKSFLKMRKHPDSVNASLRSTTVYKQKILSDGQVKVPLDDLTNHDIVKPVVNNNMGISSGINNRVLRRPSERGRAWYKGSPKHPIGKTQLLPTSKPVDL.

In terms of domain architecture, Rho-GAP spans 49–239 (VPFNALPHSA…TLIDYASDIG (191 aa)). Ser-285 carries the phosphoserine modification. The residue at position 306 (Thr-306) is a Phosphothreonine. Ser-316 and Ser-318 each carry phosphoserine. Thr-323 bears the Phosphothreonine mark. Phosphoserine is present on residues Ser-339, Ser-340, and Ser-484. Position 508 is a phosphothreonine (Thr-508). Residues 567–589 (TPSNLNNKHNSNITSSPLSGDEN) are disordered. Phosphoserine occurs at positions 582, 585, 638, and 675. Positions 714 to 734 (KQEFSSDEEIKKQQSPKDKLN) are disordered. Basic and acidic residues predominate over residues 721-734 (EEIKKQQSPKDKLN). At Ser-847 the chain carries Phosphoserine. Thr-866 carries the phosphothreonine modification. Position 868 is a phosphoserine (Ser-868). The segment at 999 to 1023 (AWYKGSPKHPIGKTQLLPTSKPVDL) is disordered.

Its subcellular location is the nucleus. In terms of biological role, GTPase activator for the Rho-type GTPases by converting them to an inactive GDP-bound state. The sequence is that of Rho GTPase-activating protein 11A from Homo sapiens (Human).